We begin with the raw amino-acid sequence, 381 residues long: Homoserine O-succinyltransferase (381 aa).

Positions 45–360 (NAVLVCHALN…PHGHDAFLLD (316 aa)) constitute an AB hydrolase-1 domain. The active-site Nucleophile is Ser151. Residue Arg221 coordinates substrate. Residues Asp321 and His354 contribute to the active site. Position 355 (Asp355) interacts with substrate.

Belongs to the AB hydrolase superfamily. MetX family. As to quaternary structure, homodimer.

Its subcellular location is the cytoplasm. It catalyses the reaction L-homoserine + succinyl-CoA = O-succinyl-L-homoserine + CoA. Its pathway is amino-acid biosynthesis; L-methionine biosynthesis via de novo pathway; O-succinyl-L-homoserine from L-homoserine: step 1/1. In terms of biological role, transfers a succinyl group from succinyl-CoA to L-homoserine, forming succinyl-L-homoserine. This is Homoserine O-succinyltransferase from Paraburkholderia phymatum (strain DSM 17167 / CIP 108236 / LMG 21445 / STM815) (Burkholderia phymatum).